Reading from the N-terminus, the 588-residue chain is Proteasome-associated ATPase (588 aa).

Over residues 1-10 the composition is skewed to basic and acidic residues; that stretch reads MAAHDDDINR. The segment at 1–22 is disordered; that stretch reads MAAHDDDINRGTRPARGSEDPA. Positions 47 to 94 form a coiled coil; it reads RILEERIVELQTNLAGVSAQNERLANTLREARDQIVALKEEVDRLAQP. Residue 276–281 participates in ATP binding; it reads GCGKTL. Residues 587-588 form a docks into pockets in the proteasome alpha-ring region; sequence YL.

Belongs to the AAA ATPase family. As to quaternary structure, homohexamer. Assembles into a hexameric ring structure that caps the 20S proteasome core. Strongly interacts with the prokaryotic ubiquitin-like protein Pup through a hydrophobic interface; the interacting region of ARC lies in its N-terminal coiled-coil domain. There is one Pup binding site per ARC hexamer ring. Upon ATP-binding, the C-terminus of ARC interacts with the alpha-rings of the proteasome core, possibly by binding to the intersubunit pockets.

The protein operates within protein degradation; proteasomal Pup-dependent pathway. Functionally, ATPase which is responsible for recognizing, binding, unfolding and translocation of pupylated proteins into the bacterial 20S proteasome core particle. May be essential for opening the gate of the 20S proteasome via an interaction with its C-terminus, thereby allowing substrate entry and access to the site of proteolysis. Thus, the C-termini of the proteasomal ATPase may function like a 'key in a lock' to induce gate opening and therefore regulate proteolysis. This chain is Proteasome-associated ATPase, found in Streptomyces griseus subsp. griseus (strain JCM 4626 / CBS 651.72 / NBRC 13350 / KCC S-0626 / ISP 5235).